An 831-amino-acid polypeptide reads, in one-letter code: MWALRSLLRPLGLRTMSQGSARRPRPSKDPLRHLRTREKRGPGPGGPNTVYLQVVAAGGRDAGAALYVFSEYNRYLFNCGEGVQRLMQEHKLKVARLDNIFLTRMHWSNVGGLCGMILTLKETGLPKCVLSGPPQLEKYLEAIKIFSGPLKGIELAVRPHSAPEYKDETMTVYQVPIHSERRCGKQQPSQSPRTSPNRLSPKQSSDSGSAENGQCPPEDSSAGANRKAWGRDPSLVVAFVCKLHLRKGNFLVLKAKELGLPVGTAAIAPIIAAVKDGKSITYEGREIAAEELCTPPDPGLVFIVVECPDEGFILPICENDTFKRYQAEADAPVALVVHIAPESVLIDSRYQQWMERFGPDTQHLILNENCPSVHNLRSHKIQTQLSLIHPDIFPQLTSFYSKEEGSTLSVPTVRGECLLKYQLRPKREWQRDTTLDCNTDEFIAEALELPSFQESVEEYRKNVQENPAPAEKRSQYPEIVFLGTGSAIPMKIRNVSSTLVNLSPDKSVLLDCGEGTFGQLCRHYGQQIDRVLCSLTAVFVSHLHADHHTGLLNILLQREHALASLGKPFQPLLVVAPTQLRAWLQQYHNHCQEILHHVSMIPAKCLQKGAEVSNTTLERLISLLLETCDLEEFQTCLVRHCKHAFGCALVHSSGWKVVYSGDTMPCEALVQMGKDATLLIHEATLEDGLEEEAVEKTHSTTSQAINVGMRMNAEFIMLNHFSQRYAKIPLFSPDFNEKVGIAFDHMKVCFGDFPTVPKLIPPLKALFAGDIEEMVERREKRELRLVRAALLTQQADSPEDREPQQKRAHTDEPHSPQSKKESVANTLGARV.

Residues 1 to 16 constitute a mitochondrion transit peptide; the sequence is MWALRSLLRPLGLRTM. Disordered stretches follow at residues 15 to 47 and 179 to 227; these read TMSQ…PGGP and SERR…ANRK. Positions 186–212 are enriched in polar residues; the sequence is QQPSQSPRTSPNRLSPKQSSDSGSAEN. Phosphoserine occurs at positions 191, 195, 200, 204, and 732. Residues 791 to 831 form a disordered region; sequence LTQQADSPEDREPQQKRAHTDEPHSPQSKKESVANTLGARV. Phosphothreonine is present on threonine 792. Phosphoserine occurs at positions 797 and 815. Residues 798-822 show a composition bias toward basic and acidic residues; it reads PEDREPQQKRAHTDEPHSPQSKKES.

This sequence belongs to the RNase Z family. In terms of assembly, homodimer. Interacts with PTCD1. Requires Zn(2+) as cofactor.

It localises to the mitochondrion. The protein localises to the mitochondrion matrix. Its subcellular location is the mitochondrion nucleoid. The protein resides in the nucleus. It carries out the reaction Endonucleolytic cleavage of RNA, removing extra 3' nucleotides from tRNA precursor, generating 3' termini of tRNAs. A 3'-hydroxy group is left at the tRNA terminus and a 5'-phosphoryl group is left at the trailer molecule.. Functionally, zinc phosphodiesterase, which displays mitochondrial tRNA 3'-processing endonuclease activity. Involved in tRNA maturation, by removing a 3'-trailer from precursor tRNA. Associates with mitochondrial DNA complexes at the nucleoids to initiate RNA processing and ribosome assembly. The sequence is that of Zinc phosphodiesterase ELAC protein 2 (Elac2) from Mus musculus (Mouse).